Consider the following 117-residue polypeptide: MTSSSTILQRLTQTIEARKSADPAHSYIAKLLSSNEDKVLKKIAEEAAETIMACKDNDREQIIYETADLWFHCLIMLARHDISPEAILSELERREGVSGIEEKLSRSQNQPEPTKAE.

A compositionally biased stretch (basic and acidic residues) spans 96–105 (GVSGIEEKLS). The disordered stretch occupies residues 96 to 117 (GVSGIEEKLSRSQNQPEPTKAE). A compositionally biased stretch (polar residues) spans 106–117 (RSQNQPEPTKAE).

This sequence belongs to the PRA-PH family.

The protein resides in the cytoplasm. The catalysed reaction is 1-(5-phospho-beta-D-ribosyl)-ATP + H2O = 1-(5-phospho-beta-D-ribosyl)-5'-AMP + diphosphate + H(+). The protein operates within amino-acid biosynthesis; L-histidine biosynthesis; L-histidine from 5-phospho-alpha-D-ribose 1-diphosphate: step 2/9. This is Phosphoribosyl-ATP pyrophosphatase from Nitrosomonas eutropha (strain DSM 101675 / C91 / Nm57).